A 311-amino-acid chain; its full sequence is Tryptophan 2,3-dioxygenase (311 aa).

Residues 1-37 (MQPPGGDAPAGCPFSGARAAQPAQAAHEAPHVPGEAD) form a disordered region. A compositionally biased stretch (low complexity) spans 17–27 (ARAAQPAQAAH). Substrate is bound by residues 80–84 (FIIQH), tyrosine 142, and arginine 146. Heme is bound at residue histidine 269. Residue threonine 283 coordinates substrate.

It belongs to the tryptophan 2,3-dioxygenase family. Homotetramer. Requires heme as cofactor.

It catalyses the reaction L-tryptophan + O2 = N-formyl-L-kynurenine. The protein operates within amino-acid degradation; L-tryptophan degradation via kynurenine pathway; L-kynurenine from L-tryptophan: step 1/2. Heme-dependent dioxygenase that catalyzes the oxidative cleavage of the L-tryptophan (L-Trp) pyrrole ring and converts L-tryptophan to N-formyl-L-kynurenine. Catalyzes the oxidative cleavage of the indole moiety. This Burkholderia cenocepacia (strain ATCC BAA-245 / DSM 16553 / LMG 16656 / NCTC 13227 / J2315 / CF5610) (Burkholderia cepacia (strain J2315)) protein is Tryptophan 2,3-dioxygenase.